A 378-amino-acid polypeptide reads, in one-letter code: S-adenosylmethionine synthase (378 aa).

ATP is bound at residue His15. Asp17 is a binding site for Mg(2+). Glu43 serves as a coordination point for K(+). L-methionine is bound by residues Glu56 and Gln99. Residues 99–109 (QSPDINQGINR) are flexible loop. Residues 164–166 (DAK), 230–231 (RF), Asp239, 245–246 (RK), Ala262, and Lys266 contribute to the ATP site. Asp239 provides a ligand contact to L-methionine. Lys270 contacts L-methionine.

The protein belongs to the AdoMet synthase family. In terms of assembly, homotetramer; dimer of dimers. The cofactor is Mg(2+). It depends on K(+) as a cofactor.

The protein localises to the cytoplasm. It catalyses the reaction L-methionine + ATP + H2O = S-adenosyl-L-methionine + phosphate + diphosphate. It functions in the pathway amino-acid biosynthesis; S-adenosyl-L-methionine biosynthesis; S-adenosyl-L-methionine from L-methionine: step 1/1. In terms of biological role, catalyzes the formation of S-adenosylmethionine (AdoMet) from methionine and ATP. The overall synthetic reaction is composed of two sequential steps, AdoMet formation and the subsequent tripolyphosphate hydrolysis which occurs prior to release of AdoMet from the enzyme. This Buchnera aphidicola subsp. Acyrthosiphon pisum (strain 5A) protein is S-adenosylmethionine synthase.